Here is a 486-residue protein sequence, read N- to C-terminus: Malonate-semialdehyde dehydrogenase (486 aa).

The NAD(+) site is built by phenylalanine 154, lysine 178, glutamate 181, arginine 182, and serine 231. Residue cysteine 286 is the Nucleophile of the active site. Glutamate 386 lines the NAD(+) pocket.

Belongs to the aldehyde dehydrogenase family. IolA subfamily. In terms of assembly, homotetramer.

It catalyses the reaction 3-oxopropanoate + NAD(+) + CoA + H2O = hydrogencarbonate + acetyl-CoA + NADH + H(+). The enzyme catalyses 2-methyl-3-oxopropanoate + NAD(+) + CoA + H2O = propanoyl-CoA + hydrogencarbonate + NADH + H(+). Its pathway is polyol metabolism; myo-inositol degradation into acetyl-CoA; acetyl-CoA from myo-inositol: step 7/7. Catalyzes the oxidation of malonate semialdehyde (MSA) and methylmalonate semialdehyde (MMSA) into acetyl-CoA and propanoyl-CoA, respectively. Is involved in a myo-inositol catabolic pathway. Bicarbonate, and not CO2, is the end-product of the enzymatic reaction. The chain is Malonate-semialdehyde dehydrogenase from Bacillus cereus (strain AH187).